A 574-amino-acid polypeptide reads, in one-letter code: Potassium-transporting ATPase potassium-binding subunit (574 aa).

A run of 10 helical transmembrane segments spans residues 7–27, 65–85, 136–156, 175–195, 264–284, 292–312, 390–410, 427–447, 494–514, and 534–554; these read IELG…GTHL, IEYA…SYLI, FGLA…AAAL, LIRI…IILL, FVEM…FGLS, WSIW…CFIF, GLYG…LMIG, MAVL…ALAL, LLLG…ILAI, and GWLF…LNFF.

This sequence belongs to the KdpA family. The system is composed of three essential subunits: KdpA, KdpB and KdpC.

It localises to the cell inner membrane. Functionally, part of the high-affinity ATP-driven potassium transport (or Kdp) system, which catalyzes the hydrolysis of ATP coupled with the electrogenic transport of potassium into the cytoplasm. This subunit binds the periplasmic potassium ions and delivers the ions to the membrane domain of KdpB through an intramembrane tunnel. The chain is Potassium-transporting ATPase potassium-binding subunit from Methylacidiphilum infernorum (isolate V4) (Methylokorus infernorum (strain V4)).